A 335-amino-acid chain; its full sequence is UPF0353 protein MLBr01808 (335 aa).

The next 2 membrane-spanning stretches (helical) occupy residues 18-38 (WFFL…MMQV) and 67-87 (VPAI…AGPT). A VWFA domain is found at 98 to 294 (VVMLVIDVSQ…AELKAVYASL (197 aa)). A helical membrane pass occupies residues 309–329 (AGWLRLGVLVLALAALTALLI).

Belongs to the UPF0353 family.

It is found in the cell membrane. This is UPF0353 protein MLBr01808 from Mycobacterium leprae (strain Br4923).